A 403-amino-acid chain; its full sequence is MLKIIDAKVIVTCPGRNFVTLKITTSDGVTGVGDATLNGRELAVVSYLRDHMIPCLIGRDAHRIEDVWQFFYRGSYWRGGPVAMTALAAVDMALWDIKAKLAGMPLYQLLGGACREGVMVYGHANGETIEDTIAEARKYQALGYKAIRLQSGVPGLPSTYGVSGDKMFYEPADGNLPTENVWSTSKYLKHAPKLFEAAREALGDDVHLLHDVHHRLTPIEAGRLGKDLEPYRLFWLEDAVPAENQAGFRLIRQHTTTPLAVGEIFSHVWDCKQLIEEQLIDYLRATVLHAGGITNLRKIAAFADLHHVRTGCHGATDLSPITMAAALHFDLSVSNFGLQEYMRHTPETDAVFPHAYSYKDGMLHPGEAPGLGVDIDEALAGQYPYKRAYLPVNRLEDGTMYNW.

Asn-38 and His-123 together coordinate substrate. Tyr-160 functions as the Proton donor/acceptor in the catalytic mechanism. Asp-211 contacts Mg(2+). His-213 acts as the Proton donor/acceptor in catalysis. Mg(2+) contacts are provided by Glu-237 and Glu-263. Residues Glu-263, Arg-284, His-313, Asp-317, and Glu-340 each coordinate substrate.

Belongs to the mandelate racemase/muconate lactonizing enzyme family. GalD subfamily. Requires Mg(2+) as cofactor.

The enzyme catalyses D-mannonate = 2-dehydro-3-deoxy-D-gluconate + H2O. It functions in the pathway carbohydrate metabolism; pentose and glucuronate interconversion. Functionally, catalyzes the dehydration of D-mannonate. Has no detectable activity with a panel of 70 other acid sugars (in vitro). The chain is D-mannonate dehydratase Caul1427 from Caulobacter sp. (strain K31).